A 423-amino-acid polypeptide reads, in one-letter code: MLDLKFVRDHFAEAEQRLATRGGAVDLSAFTDLDARRRTLLGESESLKAEKNQVSALIGKTKDKSQVQGEIARMKDVSVRIKELDEELKQVEGDLRTLLMTLPNLPHEDCPVGTSEDDNKEVRRWGQVPEFDFEAQSHWDIGERLDILDFERAGKLAGARFAIYKGAGARLERALINFMLDLHTGEHKYVEILPPLMVNRDTMTGTGQLPKFESDLFHLDDPDFFLIPTAEVPVTNIHRDEILADGDLPVCYAAYTPCFRKEAGSHGRDTRGLIRMHQFNKVELVKFARPEESDQELLKLLDNAEEVLRRLKLPYRVVDLCTGDIGFSAARTFDIEVWLPGQQTFREISSCSNFRDFQARRAAIRFRREEKGKPELVHTLNGSGLAVGRTLVAILENYQQEDGSVVIPEALRPYMGGVEKISA.

An L-serine-binding site is contributed by 229-231 (TAE). Residue 260 to 262 (RKE) coordinates ATP. Glu-283 provides a ligand contact to L-serine. ATP is bound at residue 347–350 (EISS). Residue Ser-383 participates in L-serine binding.

It belongs to the class-II aminoacyl-tRNA synthetase family. Type-1 seryl-tRNA synthetase subfamily. As to quaternary structure, homodimer. The tRNA molecule binds across the dimer.

Its subcellular location is the cytoplasm. It catalyses the reaction tRNA(Ser) + L-serine + ATP = L-seryl-tRNA(Ser) + AMP + diphosphate + H(+). It carries out the reaction tRNA(Sec) + L-serine + ATP = L-seryl-tRNA(Sec) + AMP + diphosphate + H(+). It participates in aminoacyl-tRNA biosynthesis; selenocysteinyl-tRNA(Sec) biosynthesis; L-seryl-tRNA(Sec) from L-serine and tRNA(Sec): step 1/1. Functionally, catalyzes the attachment of serine to tRNA(Ser). Is also able to aminoacylate tRNA(Sec) with serine, to form the misacylated tRNA L-seryl-tRNA(Sec), which will be further converted into selenocysteinyl-tRNA(Sec). This Syntrophotalea carbinolica (strain DSM 2380 / NBRC 103641 / GraBd1) (Pelobacter carbinolicus) protein is Serine--tRNA ligase.